The following is a 427-amino-acid chain: Outer capsid protein P8 (427 aa).

This sequence belongs to the phytoreovirus outer capsid protein P8 family. Homotrimer. Homomultimer.

It is found in the virion. Its subcellular location is the host cytoplasm. Its function is as follows. Capsid protein which self-assembles to form the outer icosahedral capsid with a T=13 symmetry, about 70 nm in diameter and consisting of 780 molecules capsid proteins. In Catharanthus roseus (Madagascar periwinkle), this protein is Outer capsid protein P8.